The following is a 635-amino-acid chain: Threonine--tRNA ligase (635 aa).

The region spanning 1-58 (MIQVTCDQKNYEVLEGTTAAELAKQLKNSHQFIGVLINERPRDLSTHLNEGDTLVFLT) is the TGS domain. Residues 237–528 (DHRVLGAKLD…LIENFKGRFP (292 aa)) form a catalytic region. Residues cysteine 328, histidine 379, and histidine 505 each contribute to the Zn(2+) site.

The protein belongs to the class-II aminoacyl-tRNA synthetase family. As to quaternary structure, homodimer. Requires Zn(2+) as cofactor.

The protein resides in the cytoplasm. The enzyme catalyses tRNA(Thr) + L-threonine + ATP = L-threonyl-tRNA(Thr) + AMP + diphosphate + H(+). In terms of biological role, catalyzes the attachment of threonine to tRNA(Thr) in a two-step reaction: L-threonine is first activated by ATP to form Thr-AMP and then transferred to the acceptor end of tRNA(Thr). Also edits incorrectly charged L-seryl-tRNA(Thr). The sequence is that of Threonine--tRNA ligase from Chlamydia pneumoniae (Chlamydophila pneumoniae).